The following is a 144-amino-acid chain: Endoribonuclease YbeY (144 aa).

Positions 104, 108, and 114 each coordinate Zn(2+).

This sequence belongs to the endoribonuclease YbeY family. Requires Zn(2+) as cofactor.

The protein resides in the cytoplasm. Its function is as follows. Single strand-specific metallo-endoribonuclease involved in late-stage 70S ribosome quality control and in maturation of the 3' terminus of the 16S rRNA. This is Endoribonuclease YbeY from Nitratiruptor sp. (strain SB155-2).